A 347-amino-acid polypeptide reads, in one-letter code: Quinolinate synthase (347 aa).

The iminosuccinate site is built by His47 and Ser68. Cys113 is a binding site for [4Fe-4S] cluster. Iminosuccinate contacts are provided by residues 139 to 141 (YAN) and Ser156. Cys200 serves as a coordination point for [4Fe-4S] cluster. Iminosuccinate is bound by residues 226-228 (HPE) and Thr243. Cys297 provides a ligand contact to [4Fe-4S] cluster.

It belongs to the quinolinate synthase family. Type 1 subfamily. It depends on [4Fe-4S] cluster as a cofactor.

It is found in the cytoplasm. It catalyses the reaction iminosuccinate + dihydroxyacetone phosphate = quinolinate + phosphate + 2 H2O + H(+). It functions in the pathway cofactor biosynthesis; NAD(+) biosynthesis; quinolinate from iminoaspartate: step 1/1. Its function is as follows. Catalyzes the condensation of iminoaspartate with dihydroxyacetone phosphate to form quinolinate. This chain is Quinolinate synthase, found in Salmonella gallinarum (strain 287/91 / NCTC 13346).